A 317-amino-acid chain; its full sequence is L-lactate dehydrogenase (317 aa).

NAD(+)-binding positions include Val18, Asp39, Lys44, Tyr69, and 83–84; that span reads GA. Substrate contacts are provided by residues Gln86, Arg92, and 124–127; that span reads NPVD. Residues 122–124 and Ser147 each bind NAD(+); that span reads VTN. 152 to 155 is a substrate binding site; that stretch reads DTAR. 2 residues coordinate beta-D-fructose 1,6-bisphosphate: Arg157 and His172. His179 serves as the catalytic Proton acceptor. A Phosphotyrosine modification is found at Tyr225. Thr234 is a binding site for substrate.

Belongs to the LDH/MDH superfamily. LDH family. Homotetramer.

Its subcellular location is the cytoplasm. The catalysed reaction is (S)-lactate + NAD(+) = pyruvate + NADH + H(+). The protein operates within fermentation; pyruvate fermentation to lactate; (S)-lactate from pyruvate: step 1/1. Its activity is regulated as follows. Allosterically activated by fructose 1,6-bisphosphate (FBP). Catalyzes the conversion of lactate to pyruvate. This is L-lactate dehydrogenase from Acetivibrio thermocellus (strain ATCC 27405 / DSM 1237 / JCM 9322 / NBRC 103400 / NCIMB 10682 / NRRL B-4536 / VPI 7372) (Clostridium thermocellum).